The chain runs to 239 residues: LexA repressor (239 aa).

A DNA-binding region (H-T-H motif) is located at residues 26 to 46 (FDEMKDALDLASKSGIHRLIT). Residues serine 159 and lysine 197 each act as for autocatalytic cleavage activity in the active site.

It belongs to the peptidase S24 family. As to quaternary structure, homodimer.

It catalyses the reaction Hydrolysis of Ala-|-Gly bond in repressor LexA.. In terms of biological role, represses a number of genes involved in the response to DNA damage (SOS response), including recA and lexA. In the presence of single-stranded DNA, RecA interacts with LexA causing an autocatalytic cleavage which disrupts the DNA-binding part of LexA, leading to derepression of the SOS regulon and eventually DNA repair. This is LexA repressor from Allorhizobium ampelinum (strain ATCC BAA-846 / DSM 112012 / S4) (Agrobacterium vitis (strain S4)).